A 130-amino-acid polypeptide reads, in one-letter code: Small ribosomal subunit protein uS8 (130 aa).

It belongs to the universal ribosomal protein uS8 family. Part of the 30S ribosomal subunit. Contacts proteins S5 and S12.

Its function is as follows. One of the primary rRNA binding proteins, it binds directly to 16S rRNA central domain where it helps coordinate assembly of the platform of the 30S subunit. In Enterobacter sp. (strain 638), this protein is Small ribosomal subunit protein uS8.